A 271-amino-acid chain; its full sequence is 2-dehydro-3-deoxyphosphooctonate aldolase (271 aa).

The protein belongs to the KdsA family.

The protein resides in the cytoplasm. It catalyses the reaction D-arabinose 5-phosphate + phosphoenolpyruvate + H2O = 3-deoxy-alpha-D-manno-2-octulosonate-8-phosphate + phosphate. Its pathway is carbohydrate biosynthesis; 3-deoxy-D-manno-octulosonate biosynthesis; 3-deoxy-D-manno-octulosonate from D-ribulose 5-phosphate: step 2/3. It functions in the pathway bacterial outer membrane biogenesis; lipopolysaccharide biosynthesis. The chain is 2-dehydro-3-deoxyphosphooctonate aldolase from Campylobacter jejuni subsp. jejuni serotype O:2 (strain ATCC 700819 / NCTC 11168).